A 989-amino-acid chain; its full sequence is Frequency clock protein (989 aa).

Disordered regions lie at residues 1 to 139 (MADS…PGFR), 208 to 290 (FAAS…VGTQ), and 331 to 445 (ISGR…PDRV). Basic and acidic residues predominate over residues 36 to 45 (ENHRLARDTS). Polar residues predominate over residues 46–88 (SRVTSSSALGVTESQPQLKSSPTRRNSSGESEPTNWFNQSNRN). The span at 109-119 (KETDSSNEESR) shows a compositional bias: basic and acidic residues. The span at 233–255 (HSSGVSLSKHDSSSSSRSRPVDS) shows a compositional bias: low complexity. Composition is skewed to polar residues over residues 256–274 (AYNSMSTGRSSHAPHSSGP) and 334–343 (RNMQRNQSMP). The span at 377 to 386 (DNPRKNRSSK) shows a compositional bias: basic and acidic residues. Positions 387–397 (DNGSASNSGGD) are enriched in polar residues. Residues 402 to 418 (GGTGTGSGDGSGSGGRT) are compositionally biased toward gly residues. Residues 433–444 (RPTRPRDLDPDR) are compositionally biased toward basic and acidic residues. Thr501 is modified (phosphothreonine). Residues Ser513 and Ser519 each carry the phosphoserine modification. 3 disordered regions span residues 524–642 (KIRW…QRRK), 865–907 (WDDG…TYMR), and 968–989 (SVATAGGAESGYSSSMEDVSSS). The short motif at 564–568 (RKKRK) is the Nuclear localization signal element. A compositionally biased stretch (polar residues) spans 598–615 (RNSSSIETSLEESMSQGS). Residues 865–886 (WDDGDDLASDDEEVEEVEEDSY) show a composition bias toward acidic residues. Polar residues predominate over residues 978–989 (GYSSSMEDVSSS).

This sequence belongs to the FRQ family. Post-translationally, progressive phosphorylation during the late circadian day and early night. Phosphorylation is also involved in regulating frq degradation. Phosphorylation by CKII may have at least three functions; it decreases the stability of frq, reduces the protein complex formation between frq and the white collar proteins, and is important for the closing of the Neurospora circadian negative feedback loop.

The protein resides in the nucleus. Circadian clock component involved in the generation of biological rhythms, in particular in rhythm stability, period length, and temperature compensation. Oscillates in abundance with a daily peak early in the morning. Behaves as a negative element in circadian transcriptional loop. May bind to wc-2 protein. The complex frq-wc-2 may turn off the expression of frq. This chain is Frequency clock protein (frq), found in Neurospora crassa (strain ATCC 24698 / 74-OR23-1A / CBS 708.71 / DSM 1257 / FGSC 987).